The chain runs to 364 residues: MPEVQRMTLTQFLIEERRRYPDASGGFNGLILNVAMACKEIARAVAFGALGGLHGKASNQAGEAGAVNVQGEIQQKLDVLSNTTFLRVNEWGGYLAGMASEEMEAPYQIPDHYPRGKYLLVFDPLDGSSNIDVNVSVGSIFSVLRAPEGASAVTEQDFLQPGSAQVAAGYALYGPTTMLVLTVGNGVNGFTLDPNLGEFFLTHPNLQVPADTQEFAINASNSRFWEAPVQRYIAECMAGKSGPRGKDFNMRWIASMVAEAHRILMRGGVFMYPRDSKDPAKPGRLRLLYEANPIAFLMEQAGGRASTGRQTLMSVAPGALHQRIGVIFGSRNEVERIEGYHTDQTDPDLPSPLFNERSLFRASA.

E101, D123, L125, and D126 together coordinate Mg(2+). Residues 126-129 (DGSS) and N218 contribute to the substrate site. E290 is a Mg(2+) binding site.

It belongs to the FBPase class 1 family. In terms of assembly, homotetramer. Mg(2+) is required as a cofactor.

The protein resides in the cytoplasm. The enzyme catalyses beta-D-fructose 1,6-bisphosphate + H2O = beta-D-fructose 6-phosphate + phosphate. It participates in carbohydrate biosynthesis; gluconeogenesis. This chain is Fructose-1,6-bisphosphatase class 1 2, found in Cupriavidus necator (strain ATCC 17699 / DSM 428 / KCTC 22496 / NCIMB 10442 / H16 / Stanier 337) (Ralstonia eutropha).